Reading from the N-terminus, the 226-residue chain is 7-cyano-7-deazaguanine synthase (226 aa).

Position 7–17 (7–17 (ISGGMDSLVTT)) interacts with ATP. The Zn(2+) site is built by C187, C195, C198, and C201.

Belongs to the QueC family. It depends on Zn(2+) as a cofactor.

It carries out the reaction 7-carboxy-7-deazaguanine + NH4(+) + ATP = 7-cyano-7-deazaguanine + ADP + phosphate + H2O + H(+). It functions in the pathway purine metabolism; 7-cyano-7-deazaguanine biosynthesis. In terms of biological role, catalyzes the ATP-dependent conversion of 7-carboxy-7-deazaguanine (CDG) to 7-cyano-7-deazaguanine (preQ(0)). The chain is 7-cyano-7-deazaguanine synthase from Chlorobium limicola (strain DSM 245 / NBRC 103803 / 6330).